Here is a 62-residue protein sequence, read N- to C-terminus: MKIHKCSFCGADIPPGYGIMYVRSDGTVQRFCSRKCFVSAVKYGRNPRKLAWVRKKKAKTSK.

Zn(2+) contacts are provided by cysteine 6, cysteine 9, cysteine 32, and cysteine 36. The C4-type zinc finger occupies 6 to 36 (CSFCGADIPPGYGIMYVRSDGTVQRFCSRKC).

The protein belongs to the eukaryotic ribosomal protein eL24 family. In terms of assembly, part of the 50S ribosomal subunit. Forms a cluster with proteins L3 and L14. The cofactor is Zn(2+).

Functionally, binds to the 23S rRNA. The chain is Large ribosomal subunit protein eL24 from Pyrobaculum calidifontis (strain DSM 21063 / JCM 11548 / VA1).